The primary structure comprises 346 residues: Protein RecA (346 aa).

Residue 65-72 (GPESSGKT) participates in ATP binding.

This sequence belongs to the RecA family.

The protein resides in the cytoplasm. Can catalyze the hydrolysis of ATP in the presence of single-stranded DNA, the ATP-dependent uptake of single-stranded DNA by duplex DNA, and the ATP-dependent hybridization of homologous single-stranded DNAs. It interacts with LexA causing its activation and leading to its autocatalytic cleavage. The sequence is that of Protein RecA from Pseudomonas aeruginosa (strain UCBPP-PA14).